We begin with the raw amino-acid sequence, 476 residues long: Glycogen synthase (476 aa).

Lysine 15 serves as a coordination point for ADP-alpha-D-glucose.

This sequence belongs to the glycosyltransferase 1 family. Bacterial/plant glycogen synthase subfamily.

It catalyses the reaction [(1-&gt;4)-alpha-D-glucosyl](n) + ADP-alpha-D-glucose = [(1-&gt;4)-alpha-D-glucosyl](n+1) + ADP + H(+). Its pathway is glycan biosynthesis; glycogen biosynthesis. In terms of biological role, synthesizes alpha-1,4-glucan chains using ADP-glucose. The sequence is that of Glycogen synthase from Yersinia pseudotuberculosis serotype IB (strain PB1/+).